We begin with the raw amino-acid sequence, 679 residues long: Methionine--tRNA ligase (679 aa).

Zn(2+) is bound by residues Cys147, Cys150, Cys160, and Cys163. The 'KMSKS' region signature appears at Lys332 to Ser336. Thr335 serves as a coordination point for ATP. One can recognise a tRNA-binding domain in the interval Asp578–Lys679.

It belongs to the class-I aminoacyl-tRNA synthetase family. MetG type 1 subfamily. As to quaternary structure, homodimer. Requires Zn(2+) as cofactor.

It is found in the cytoplasm. The catalysed reaction is tRNA(Met) + L-methionine + ATP = L-methionyl-tRNA(Met) + AMP + diphosphate. Functionally, is required not only for elongation of protein synthesis but also for the initiation of all mRNA translation through initiator tRNA(fMet) aminoacylation. The sequence is that of Methionine--tRNA ligase from Bacteroides fragilis (strain YCH46).